Here is a 1046-residue protein sequence, read N- to C-terminus: DNA-directed RNA polymerase subunit beta' (1046 aa).

Mg(2+) contacts are provided by aspartate 383, aspartate 385, and aspartate 387. The Zn(2+) site is built by cysteine 752, cysteine 826, cysteine 833, and cysteine 836.

This sequence belongs to the RNA polymerase beta' chain family. As to quaternary structure, the RNAP catalytic core consists of 2 alpha, 1 beta, 1 beta' and 1 omega subunit. When a sigma factor is associated with the core the holoenzyme is formed, which can initiate transcription. Requires Mg(2+) as cofactor. It depends on Zn(2+) as a cofactor.

The catalysed reaction is RNA(n) + a ribonucleoside 5'-triphosphate = RNA(n+1) + diphosphate. Its function is as follows. DNA-dependent RNA polymerase catalyzes the transcription of DNA into RNA using the four ribonucleoside triphosphates as substrates. This is DNA-directed RNA polymerase subunit beta' from Weissella hellenica.